A 625-amino-acid polypeptide reads, in one-letter code: Mesothelin (625 aa).

A signal peptide spans methionine 1–leucine 35. An N-linked (GlcNAc...) asparagine glycan is attached at asparagine 93. Serine 202 carries the phosphoserine modification. A disulfide bridge connects residues cysteine 304 and cysteine 328. N-linked (GlcNAc...) asparagine glycans are attached at residues asparagine 390, asparagine 488, and asparagine 517. Serine 600 carries the GPI-anchor amidated serine lipid modification. The propeptide at serine 601–serine 625 is removed in mature form.

It belongs to the mesothelin family. Interacts with MUC16. In terms of processing, proteolytically cleaved by a furin-like convertase to generate megakaryocyte-potentiating factor (MPF), and the cleaved form of mesothelin. Highly expressed in lung and heart. Expressed at low levels in spleen, liver, kidney and testis. Present in lung (at protein level).

Its subcellular location is the cell membrane. It is found in the golgi apparatus. The protein resides in the secreted. In terms of biological role, membrane-anchored forms may play a role in cellular adhesion. Its function is as follows. Megakaryocyte-potentiating factor (MPF) may potentiate megakaryocyte colony formation. The polypeptide is Mesothelin (Msln) (Mus musculus (Mouse)).